A 165-amino-acid chain; its full sequence is Phosphopantetheine adenylyltransferase (165 aa).

Position 9 (T9) interacts with substrate. ATP is bound by residues T9 to F10 and H17. 3 residues coordinate substrate: K41, L73, and R87. Residues G88–R90, E98, and Y123–T129 each bind ATP.

The protein belongs to the bacterial CoaD family. In terms of assembly, homohexamer. Mg(2+) serves as cofactor.

Its subcellular location is the cytoplasm. It carries out the reaction (R)-4'-phosphopantetheine + ATP + H(+) = 3'-dephospho-CoA + diphosphate. The protein operates within cofactor biosynthesis; coenzyme A biosynthesis; CoA from (R)-pantothenate: step 4/5. Reversibly transfers an adenylyl group from ATP to 4'-phosphopantetheine, yielding dephospho-CoA (dPCoA) and pyrophosphate. The protein is Phosphopantetheine adenylyltransferase of Burkholderia orbicola (strain MC0-3).